Consider the following 443-residue polypeptide: Chromosome partition protein MukF (443 aa).

The segment at 209–237 (LDETSGNLRELQDTLNAAGDKLQAQLLRI) is leucine-zipper.

This sequence belongs to the MukF family. In terms of assembly, interacts, and probably forms a ternary complex, with MukE and MukB via its C-terminal region. The complex formation is stimulated by calcium or magnesium. It is required for an interaction between MukE and MukB.

It is found in the cytoplasm. The protein localises to the nucleoid. Functionally, involved in chromosome condensation, segregation and cell cycle progression. May participate in facilitating chromosome segregation by condensation DNA from both sides of a centrally located replisome during cell division. Not required for mini-F plasmid partitioning. Probably acts via its interaction with MukB and MukE. Overexpression results in anucleate cells. It has a calcium binding activity. The chain is Chromosome partition protein MukF from Actinobacillus pleuropneumoniae serotype 5b (strain L20).